Consider the following 490-residue polypeptide: Tektin-3 (490 aa).

Residues Thr7, Thr9, and Thr11 are each glycosylated (O-linked (GalNAc...) threonine). Asn41, Asn86, Asn111, and Asn276 each carry an N-linked (GlcNAc...) asparagine glycan. Residues 415 to 461 (MAQLRLVNEVYEVDETIQTLQQRLRDSEDTLQSLAHTKATLEHDLAV) are a coiled coil.

The protein belongs to the tektin family. In terms of assembly, microtubule inner protein component of sperm flagellar doublet microtubules. Interacts with TEKT1, TEKT2, TEKT4 and TEKT5. Interacts with CCDC38. Post-translationally, N- and O-glycosylated. In terms of processing, ubiquitinated, leading to its degradation. Deubiquitinated by USP16, promoting its stability. May be proteolytically processed during the epididymal transit of spermatozoa. In terms of tissue distribution, expressed preferentially in testis. Expressed predominantly in late pachytene spermatocytes and early round spermatids. Expressed in spermatozoa.

It is found in the cytoplasm. The protein localises to the cytoskeleton. It localises to the cilium axoneme. The protein resides in the flagellum axoneme. Its subcellular location is the cytoplasmic vesicle. It is found in the secretory vesicle. The protein localises to the acrosome outer membrane. In terms of biological role, microtubule inner protein (MIP) part of the dynein-decorated doublet microtubules (DMTs) in cilia and flagellar axoneme. Forms filamentous polymers in the walls of ciliary and flagellar microtubules. Required for normal sperm mobility. This Mus musculus (Mouse) protein is Tektin-3 (Tekt3).